Here is a 103-residue protein sequence, read N- to C-terminus: Large ribosomal subunit protein bL21 (103 aa).

Belongs to the bacterial ribosomal protein bL21 family. As to quaternary structure, part of the 50S ribosomal subunit. Contacts protein L20.

Its function is as follows. This protein binds to 23S rRNA in the presence of protein L20. The polypeptide is Large ribosomal subunit protein bL21 (Borreliella burgdorferi (strain ZS7) (Borrelia burgdorferi)).